The following is a 70-amino-acid chain: uncharacterized protein (70 aa).

This is an uncharacterized protein from Dictyostelium discoideum (Social amoeba).